Consider the following 145-residue polypeptide: uncharacterized protein (145 aa).

The protein belongs to the asfivirus K145R family.

The protein resides in the virion. This is an uncharacterized protein from African swine fever virus (isolate Tick/South Africa/Pretoriuskop Pr4/1996) (ASFV).